A 144-amino-acid polypeptide reads, in one-letter code: Large ribosomal subunit protein uL16 (144 aa).

It belongs to the universal ribosomal protein uL16 family. As to quaternary structure, part of the 50S ribosomal subunit.

In terms of biological role, binds 23S rRNA and is also seen to make contacts with the A and possibly P site tRNAs. This is Large ribosomal subunit protein uL16 from Lacticaseibacillus paracasei (strain ATCC 334 / BCRC 17002 / CCUG 31169 / CIP 107868 / KCTC 3260 / NRRL B-441) (Lactobacillus paracasei).